A 568-amino-acid chain; its full sequence is T-complex protein 1 subunit theta (568 aa).

Lys15 participates in a covalent cross-link: Glycyl lysine isopeptide (Lys-Gly) (interchain with G-Cter in ubiquitin). Ser505 bears the Phosphoserine mark.

The protein belongs to the TCP-1 chaperonin family. Heterooligomeric complex of about 850 to 900 kDa that forms two stacked rings, 12 to 16 nm in diameter.

It is found in the cytoplasm. Its function is as follows. Molecular chaperone; assists the folding of proteins upon ATP hydrolysis. Known to play a role, in vitro, in the folding of actin and tubulin. In yeast may play a role in mitotic spindle formation. The polypeptide is T-complex protein 1 subunit theta (CCT8) (Saccharomyces cerevisiae (strain ATCC 204508 / S288c) (Baker's yeast)).